We begin with the raw amino-acid sequence, 237 residues long: Aliphatic sulfonates import ATP-binding protein SsuB 1 (237 aa).

The 217-residue stretch at 5–221 folds into the ABC transporter domain; sequence LMNIRVDRKA…PRDRRDPLLA (217 aa). Residue 38–45 participates in ATP binding; sequence GPSGCGKS.

This sequence belongs to the ABC transporter superfamily. Aliphatic sulfonates importer (TC 3.A.1.17.2) family. As to quaternary structure, the complex is composed of two ATP-binding proteins (SsuB), two transmembrane proteins (SsuC) and a solute-binding protein (SsuA).

Its subcellular location is the cell inner membrane. It catalyses the reaction ATP + H2O + aliphatic sulfonate-[sulfonate-binding protein]Side 1 = ADP + phosphate + aliphatic sulfonateSide 2 + [sulfonate-binding protein]Side 1.. Part of the ABC transporter complex SsuABC involved in aliphatic sulfonates import. Responsible for energy coupling to the transport system. The polypeptide is Aliphatic sulfonates import ATP-binding protein SsuB 1 (Pseudomonas savastanoi pv. phaseolicola (strain 1448A / Race 6) (Pseudomonas syringae pv. phaseolicola (strain 1448A / Race 6))).